Reading from the N-terminus, the 253-residue chain is Succinate dehydrogenase iron-sulfur subunit (253 aa).

C64, C69, and C84 together coordinate [2Fe-2S] cluster. One can recognise a 4Fe-4S ferredoxin-type domain in the interval 146 to 174 (RQWAYELSKCMTCGVCLEACPNVNSKSKF). [4Fe-4S] cluster-binding residues include C155, C158, and C161. C165, C212, and C218 together coordinate [3Fe-4S] cluster. Residue C222 participates in [4Fe-4S] cluster binding.

It belongs to the succinate dehydrogenase/fumarate reductase iron-sulfur protein family. In terms of assembly, in B.subtilis succinate dehydrogenase forms part of an enzyme complex containing three subunits: a flavoprotein, an iron-sulfur protein and cytochrome b-558. It depends on [2Fe-2S] cluster as a cofactor. [3Fe-4S] cluster is required as a cofactor. The cofactor is [4Fe-4S] cluster.

The enzyme catalyses a quinone + succinate = fumarate + a quinol. The protein operates within carbohydrate metabolism; tricarboxylic acid cycle; fumarate from succinate (bacterial route): step 1/1. The polypeptide is Succinate dehydrogenase iron-sulfur subunit (sdhB) (Bacillus subtilis (strain 168)).